We begin with the raw amino-acid sequence, 343 residues long: MSILIENISKTFGTFRALDHVNLEVKAGSLVALVGPSGSGKSTLLRMIAGLERADEGKIWLAGRDATYAPIQKRHIGFVFQNYALFKHLNVAKNISFGLEVRQANPNQIRSRVRDLLQLIQLEHMADRYPAQLSGGQRQRVALARALAVEPKVLLLDEPFGALDARVRRELRSWLRDLHQEMPVTTVFVTHDQQEAMEVAHEIVVFNQGRLEQVGSPQEIYDHPATPFVMGFMGHINHGVDDVQQSSYFVRPNDVIIQLVPSTNSLSGKVVGMTYGDTSMKLDVDIPQQVPSSDWAPRGSLWRIHLSRRDFNQFNSMLVGGIQIGSVLYVQPRRTEMVRGYSI.

Residues Ile3–Met233 form the ABC transporter domain. Gly35–Ser42 serves as a coordination point for ATP.

The protein belongs to the ABC transporter superfamily. Sulfate/tungstate importer (TC 3.A.1.6) family.

The protein resides in the plastid. The protein localises to the chloroplast. It carries out the reaction sulfate(out) + ATP + H2O = sulfate(in) + ADP + phosphate + H(+). The catalysed reaction is thiosulfate(out) + ATP + H2O = thiosulfate(in) + ADP + phosphate + H(+). Functionally, part of the ABC transporter complex involved in sulfate/thiosulfate import. Responsible for energy coupling to the transport system. The sequence is that of Sulfate/thiosulfate import ATP-binding protein CysA from Nephroselmis olivacea (Green alga).